Consider the following 224-residue polypeptide: Virulence transcriptional regulatory protein PhoP (224 aa).

In terms of domain architecture, Response regulatory spans 3 to 117; sequence RVLVVEDNAL…EVMARMQALM (115 aa). D52 carries the post-translational modification 4-aspartylphosphate. The segment at residues 125 to 223 is a DNA-binding region (ompR/PhoB-type); that stretch reads SQVINIPPFQ…VRGQGYLFEL (99 aa).

Post-translationally, phosphorylated by PhoQ.

Its subcellular location is the cytoplasm. In terms of biological role, member of the two-component regulatory system PhoQ/PhoP which regulates the expression of genes involved in virulence and resistance to host defense antimicrobial peptides. The sequence is that of Virulence transcriptional regulatory protein PhoP (phoP) from Salmonella choleraesuis (strain SC-B67).